The following is a 65-amino-acid chain: Alpha-toxin OD1 (65 aa).

Residues 3–65 form the LCN-type CS-alpha/beta domain; sequence RDAYIADDKN…VPIRIPGKCR (63 aa). Positions 9–11 match the Important for toxin selectivity for individual Nav channel subtype (Nav1.6/SCN8A and Nav1.7/SCN9A), but not for toxin potency motif; the sequence is DDK. 4 disulfide bridges follow: C13/C64, C17/C37, C23/C47, and C27/C49. R65 bears the Arginine amide mark.

It belongs to the long (4 C-C) scorpion toxin superfamily. Sodium channel inhibitor family. Alpha subfamily. In terms of tissue distribution, expressed by the venom gland.

The protein localises to the secreted. In terms of biological role, alpha toxins bind voltage-independently at site-3 of sodium channels and inhibit the inactivation of the activated channels. The toxin affect mammalian sodium channels Nav1.7/SCN9A (EC(50)=4.5 nM), Nav1.4/SCN4A (EC(50)=9.6 nM), Nav1.6/SCN8A (EC(50)=30 nM), Nav1.5/SCN5A (only at micromolar concentrations), and insect sodium channel para/tipE (EC(50)=80 nM). In vivo, intraplantar administration of this toxin elicits pain behaviors, including licking and flinching of the hind paw. This Odontobuthus doriae (Yellow Iranian scorpion) protein is Alpha-toxin OD1.